The sequence spans 88 residues: Large ribosomal subunit protein bL31B (88 aa).

This sequence belongs to the bacterial ribosomal protein bL31 family. Type B subfamily. As to quaternary structure, part of the 50S ribosomal subunit.

This is Large ribosomal subunit protein bL31B from Paraburkholderia phytofirmans (strain DSM 17436 / LMG 22146 / PsJN) (Burkholderia phytofirmans).